A 330-amino-acid chain; its full sequence is Beta-ketoacyl-[acyl-carrier-protein] synthase III (330 aa).

Residues Cys115 and His255 contribute to the active site. The interval 256 to 260 (QANFR) is ACP-binding. The active site involves Asn285.

The protein belongs to the thiolase-like superfamily. FabH family. As to quaternary structure, homodimer.

The protein resides in the cytoplasm. The catalysed reaction is malonyl-[ACP] + acetyl-CoA + H(+) = 3-oxobutanoyl-[ACP] + CO2 + CoA. It participates in lipid metabolism; fatty acid biosynthesis. Catalyzes the condensation reaction of fatty acid synthesis by the addition to an acyl acceptor of two carbons from malonyl-ACP. Catalyzes the first condensation reaction which initiates fatty acid synthesis and may therefore play a role in governing the total rate of fatty acid production. Possesses both acetoacetyl-ACP synthase and acetyl transacylase activities. Its substrate specificity determines the biosynthesis of branched-chain and/or straight-chain of fatty acids. The polypeptide is Beta-ketoacyl-[acyl-carrier-protein] synthase III (Helicobacter pylori (strain G27)).